The following is a 106-amino-acid chain: MALWMQCLPLVLVLLFSTPNTEALANQHLCGSHLVEALYLVCGDRGFFYYPKIKRDIEQAQVNGPQDNELDGMQFQPQEYQKMKRGIVEQCCHSTCSLFQLENYCN.

Positions 1–23 (MALWMQCLPLVLVLLFSTPNTEA) are cleaved as a signal peptide. Disulfide bonds link cysteine 30-cysteine 92, cysteine 42-cysteine 105, and cysteine 91-cysteine 96. Residues 56–83 (DIEQAQVNGPQDNELDGMQFQPQEYQKM) constitute a propeptide, c peptide.

Belongs to the insulin family. In terms of assembly, heterodimer of a B chain and an A chain linked by two disulfide bonds.

It is found in the secreted. Its function is as follows. Insulin decreases blood glucose concentration. It increases cell permeability to monosaccharides, amino acids and fatty acids. It accelerates glycolysis, the pentose phosphate cycle, and glycogen synthesis in liver. This Xenopus laevis (African clawed frog) protein is Insulin-2 (ins-b).